We begin with the raw amino-acid sequence, 97 residues long: Plasmid stability protein StbC (97 aa).

Functionally, involved in plasmid stability. The protein is Plasmid stability protein StbC (stbC) of Pseudomonas syringae pv. tomato (strain ATCC BAA-871 / DC3000).